Here is a 339-residue protein sequence, read N- to C-terminus: Quinolinate synthase (339 aa).

Iminosuccinate is bound by residues His-63 and Ser-81. Cys-126 serves as a coordination point for [4Fe-4S] cluster. Residues 152-154 (YVN) and Ser-169 each bind iminosuccinate. A [4Fe-4S] cluster-binding site is contributed by Cys-211. Residues 237-239 (HPE) and Thr-254 each bind iminosuccinate. Residue Cys-297 coordinates [4Fe-4S] cluster.

This sequence belongs to the quinolinate synthase family. Type 2 subfamily. [4Fe-4S] cluster is required as a cofactor.

The protein resides in the cytoplasm. It catalyses the reaction iminosuccinate + dihydroxyacetone phosphate = quinolinate + phosphate + 2 H2O + H(+). It participates in cofactor biosynthesis; NAD(+) biosynthesis; quinolinate from iminoaspartate: step 1/1. Catalyzes the condensation of iminoaspartate with dihydroxyacetone phosphate to form quinolinate. This Xylella fastidiosa (strain Temecula1 / ATCC 700964) protein is Quinolinate synthase.